The sequence spans 201 residues: Lipoprotein signal peptidase (201 aa).

2 helical membrane passes run 73–93 and 97–117; these read SNAIFLITNTIIVCYLYYLMI and TIGSFAGYSFVIGGAVGNLID. Residues Asp126 and Asp144 contribute to the active site. A helical transmembrane segment spans residues 135-155; that stretch reads YSFPVFNLADCFIIIGVIILI.

Belongs to the peptidase A8 family.

Its subcellular location is the cell inner membrane. The catalysed reaction is Release of signal peptides from bacterial membrane prolipoproteins. Hydrolyzes -Xaa-Yaa-Zaa-|-(S,diacylglyceryl)Cys-, in which Xaa is hydrophobic (preferably Leu), and Yaa (Ala or Ser) and Zaa (Gly or Ala) have small, neutral side chains.. It participates in protein modification; lipoprotein biosynthesis (signal peptide cleavage). Its function is as follows. This protein specifically catalyzes the removal of signal peptides from prolipoproteins. This Rickettsia conorii (strain ATCC VR-613 / Malish 7) protein is Lipoprotein signal peptidase.